Consider the following 205-residue polypeptide: High frequency lysogenization protein HflD homolog (205 aa).

Belongs to the HflD family.

The protein resides in the cytoplasm. The protein localises to the cell inner membrane. This chain is High frequency lysogenization protein HflD homolog, found in Shewanella sp. (strain ANA-3).